Reading from the N-terminus, the 355-residue chain is Peptide chain release factor 1 (355 aa).

Position 231 is an N5-methylglutamine (glutamine 231). Over residues 283 to 292 (LAKETSERKS) the composition is skewed to basic and acidic residues. Residues 283–306 (LAKETSERKSQVGTGDRSGRIRTY) are disordered.

It belongs to the prokaryotic/mitochondrial release factor family. In terms of processing, methylated by PrmC. Methylation increases the termination efficiency of RF1.

It localises to the cytoplasm. Functionally, peptide chain release factor 1 directs the termination of translation in response to the peptide chain termination codons UAG and UAA. The polypeptide is Peptide chain release factor 1 (Campylobacter concisus (strain 13826)).